We begin with the raw amino-acid sequence, 231 residues long: Probable septum site-determining protein MinC (231 aa).

The segment at 100–125 (EGKEKSPRPAPAPQAPAQNTTPVTKT) is disordered.

The protein belongs to the MinC family. As to quaternary structure, interacts with MinD and FtsZ.

In terms of biological role, cell division inhibitor that blocks the formation of polar Z ring septums. Rapidly oscillates between the poles of the cell to destabilize FtsZ filaments that have formed before they mature into polar Z rings. Prevents FtsZ polymerization. The protein is Probable septum site-determining protein MinC of Escherichia coli O81 (strain ED1a).